Consider the following 177-residue polypeptide: Anti-apoptotic protein NR13 (177 aa).

A BH1 motif is present at residues 75-94; the sequence is LETDGGLNWGRLLALVVFAG. Residues 86-106 form a helical membrane-spanning segment; it reads LLALVVFAGTLAAALAESACE. The short motif at 126–141 is the BH2 element; sequence EWMEEHGGWDGFCRFF. Residues 156 to 176 traverse the membrane as a helical segment; the sequence is SNAIMAAAGFGIAGLAFLLVV.

This sequence belongs to the Bcl-2 family. Interacts with BAX. As to expression, mainly expressed in neural and muscular tissues.

The protein resides in the cell membrane. Functionally, shows anti-apoptotic properties. Counteract the pro-apoptotic activity of BAX. This is Anti-apoptotic protein NR13 (NR13) from Coturnix japonica (Japanese quail).